The following is a 531-amino-acid chain: Zinc finger CCCH-type with G patch domain-containing protein (531 aa).

N-acetylmethionine is present on Met-1. Positions 91–133 are disordered; the sequence is EAPAAARGSGSETVPKAEAGPESAAGGQEEEEGEDEEELSGTK. Over residues 107 to 117 the composition is skewed to low complexity; it reads AEAGPESAAGG. Acidic residues predominate over residues 118-129; that stretch reads QEEEEGEDEEEL. Residues 175 to 201 form a C3H1-type zinc finger; the sequence is KSLKPCPFFLEGKCRFKENCRFSHGQV. Residues 267–289 are disordered; the sequence is PPLRTEATESDSDSDGTGDSSYA. Residues 333–379 enclose the G-patch domain; the sequence is TRGIGSRLLTKMGYEFGKGLGRHAEGRVEPIHAVVLPRGKSLDQCVE. Ser-373 is subject to Phosphoserine. Disordered regions lie at residues 385–409, 426–446, and 509–531; these read TRVG…GGRP, APGA…DMYH, and RAQE…MTEF. The segment covering 426 to 438 has biased composition (low complexity); the sequence is APGALEAGAAPAG. The segment covering 518 to 531 has biased composition (basic and acidic residues); sequence EQRKADTHKKMTEF.

As to quaternary structure, interacts with CHD4/Mi-2; the interaction is direct. Ubiquitinated in case of infection by HIV-1, leading to its degradation. Ubiquitination is mediated by the CUL4A-RBX1-DDB1-DCAF1/VPRBP complex that is hijacked by HIV-1 via interaction between HIV-1 Vpr and DCAF1/VPRBP. In terms of tissue distribution, widely expressed.

The protein resides in the nucleus. In terms of biological role, transcription repressor that specifically binds the 5'-GGAG[GA]A[GA]A-3' consensus sequence. Represses transcription by recruiting the chromatin multiprotein complex NuRD to target promoters. Negatively regulates expression of EGFR, a gene involved in cell proliferation, survival and migration. Its ability to repress genes of the EGFR pathway suggest it may act as a tumor suppressor. Able to suppress breast carcinogenesis. Functionally, antagonizes the transcription repression by isoform 1 by competing for the binding of the NuRD complex. Does not bind DNA. This chain is Zinc finger CCCH-type with G patch domain-containing protein (ZGPAT), found in Homo sapiens (Human).